A 158-amino-acid chain; its full sequence is C-type lectin lectoxin-Thr1 (158 aa).

Residues 1 to 23 (MGRFIFATLGLLLVAFSINGAKG) form the signal peptide. Intrachain disulfides connect Cys-26–Cys-37, Cys-54–Cys-154, and Cys-129–Cys-146. Positions 33–155 (LKGFCYKVFN…CASTRAYLCK (123 aa)) constitute a C-type lectin domain. Residues 119–121 (EPN) carry the Mannose-binding motif. 3 residues coordinate Ca(2+): Glu-127, Asn-142, and Asp-143.

The protein belongs to the true venom lectin family. As to expression, expressed by the venom gland.

The protein resides in the secreted. Its function is as follows. Mannose-binding lectin which recognizes specific carbohydrate structures and agglutinates a variety of animal cells by binding to cell-surface glycoproteins and glycolipids. May be a calcium-dependent lectin. The chain is C-type lectin lectoxin-Thr1 from Thrasops jacksonii (Jackson's black tree snake).